The following is a 151-amino-acid chain: Small ribosomal subunit protein uS15 (151 aa).

The span at M1–R16 shows a compositional bias: basic residues. The tract at residues M1–T21 is disordered.

This sequence belongs to the universal ribosomal protein uS15 family. As to quaternary structure, part of the 30S ribosomal subunit.

The protein is Small ribosomal subunit protein uS15 of Pyrobaculum islandicum (strain DSM 4184 / JCM 9189 / GEO3).